We begin with the raw amino-acid sequence, 314 residues long: WD repeat domain-containing protein 83 (314 aa).

WD repeat units follow at residues 23–62 (CNQG…LLKT), 65–104 (GHGY…VVRK), 107–146 (GHAG…PDAI), 151–188 (EAKD…MCAD), 189–228 (YLGS…LLGE), 231–272 (GHQN…LVLK), and 275–313 (VGKA…EEGG).

This sequence belongs to the WD repeat MORG1 family.

It localises to the cytoplasm. In terms of biological role, molecular scaffold protein for various multimeric protein complexes. Acts as a module in the assembly of a multicomponent scaffold for the ERK pathway, linking ERK responses to specific agonists. Also involved in response to hypoxia by acting as a negative regulator of HIF1A/HIF-1-alpha. This Xenopus laevis (African clawed frog) protein is WD repeat domain-containing protein 83 (wdr83).